An 861-amino-acid polypeptide reads, in one-letter code: DNA mismatch repair protein MutS (861 aa).

Position 613-620 (613-620 (GPNMGGKS)) interacts with ATP.

Belongs to the DNA mismatch repair MutS family.

Its function is as follows. This protein is involved in the repair of mismatches in DNA. It is possible that it carries out the mismatch recognition step. This protein has a weak ATPase activity. The polypeptide is DNA mismatch repair protein MutS (Dichelobacter nodosus (strain VCS1703A)).